The sequence spans 99 residues: Progonadoliberin-1 (99 aa).

An N-terminal signal peptide occupies residues 1–26 (MAAQTFALRLLLVGTLLGTLLGQGCC). Pyrrolidone carboxylic acid is present on Q27. Position 36 is a glycine amide (G36).

It belongs to the GnRH family.

The protein localises to the secreted. In terms of biological role, stimulates the secretion of gonadotropins. In Dicentrarchus labrax (European seabass), this protein is Progonadoliberin-1 (gnrh1).